The chain runs to 1019 residues: MWVQGHSSRASATESVSFSGIVQMDEDTHYDKVEDVVGSHIEDAVTFWAQSINRNKDIMKIGCSLSEVCPQASSVLGNLDPNKIYGGLFSEDQCWYRCKVLKIISVEKCLVRYIDYGNTEILNRSDIVEIPLELQFSSVAKKYKLWGLHIPSDQEVTQFDQGTTFLGSLIFEKEIKMRIKATSEDGTVIAQAEYGSVDIGEEVLKKGFAEKCRLASRTDICEEKKLDPGQLVLRNLKSPIPLWGHRSNQSTFSRPKGHLSEKMTLDLKDENDAGNLITFPKESLAVGDFNLGSNVSLEKIKQDQKLIEENEKLKTEKDALLESYKALELKVEQIAQELQQEKAAAVDLTNHLEYTLKTYIDTRMKNLAAKMEILKEMRHVDISVRFGKDLSDAIQVLDEGCFTTPASLNGLEIIWAEYSLAQENIKTCEYVSEGNILIAQRNEMQQKLYMSVEDFILEVDESSLNKRLKTLQDLSVSLEAVYGQAKEGANSDEILKKFYDWKCDKREEFTSVRSETDASLHRLVAWFQRTLKVFDLSVEGSLISEDAMDNIDEILEKTESSVCKELEIALVDQGDADKEIISNTYSQVLQKIHSEERLIATVQAKYKDSIEFKKQLIEYLNKSPSVDHLLSIKKTLKSLKALLRWKLVEKSNLEESDDPDGSQIEKIKEEITQLRNNVFQEIYHEREEYEMLTSLAQKWFPELPLLHPEIGLLKYMNSGGLLTMSLERDLLDAEPMKELSSKRPLVRSEVNGQIILLKGYSVDVDTEAKVIERAATYHRAWREAEGDSGLLPLIFLFLCKSDPMAYLMVPYYPRANLNAVQANMPLNSEETLKVMKGVAQGLHTLHKADIIHGSLHQNNVFALNREQGIVGDFDFTKSVSQRASVNMMVGDLSLMSPELKMGKPASPGSDLYAYGCLLLWLSVQNQEFEINKDGIPKVDQFHLDDKVKSLLCSLICYRSSMTAEQVLNAECFLMPKEQSVPNPEKDTEYTLYKKEEEIKTENLDKCMEKTRNGEANFDC.

Residues 78-137 (NLDPNKIYGGLFSEDQCWYRCKVLKIISVEKCLVRYIDYGNTEILNRSDIVEIPLELQFS) form the Tudor domain. A coiled-coil region spans residues 298-355 (EKIKQDQKLIEENEKLKTEKDALLESYKALELKVEQIAQELQQEKAAAVDLTNHLEYT). Positions 710–1019 (IGLLKYMNSG…TRNGEANFDC (310 aa)) constitute a Protein kinase domain. ATP is bound by residues 716-724 (MNSGGLLTM) and Lys-737.

This sequence belongs to the protein kinase superfamily. Ser/Thr protein kinase family. In terms of tissue distribution, testis specific.

It carries out the reaction L-seryl-[protein] + ATP = O-phospho-L-seryl-[protein] + ADP + H(+). The enzyme catalyses L-threonyl-[protein] + ATP = O-phospho-L-threonyl-[protein] + ADP + H(+). The chain is Serine/threonine-protein kinase 31 (STK31) from Homo sapiens (Human).